A 312-amino-acid polypeptide reads, in one-letter code: Pseudouridine-5'-phosphate glycosidase (312 aa).

E31 (proton donor) is an active-site residue. K93 and V113 together coordinate substrate. D145 provides a ligand contact to Mn(2+). 147 to 149 (SAD) is a binding site for substrate. The active-site Nucleophile is the K166.

It belongs to the pseudouridine-5'-phosphate glycosidase family. Homotrimer. Mn(2+) is required as a cofactor. Requires Fe(2+) as cofactor. It depends on Co(2+) as a cofactor.

It catalyses the reaction D-ribose 5-phosphate + uracil = psi-UMP + H2O. Its activity is regulated as follows. Inhibited by Zn(2+) and Ni(2+). Catalyzes the reversible cleavage of pseudouridine 5'-phosphate (PsiMP) to ribose 5-phosphate and uracil. Functions biologically in the cleavage direction, as part of a pseudouridine degradation pathway. This is Pseudouridine-5'-phosphate glycosidase from Escherichia coli (strain K12).